The primary structure comprises 506 residues: F-box protein At4g02760 (506 aa).

One can recognise an F-box domain in the interval T115–L161. Residues T452 to D506 form a disordered region. The segment covering S459 to E492 has biased composition (low complexity). Over residues S493–D506 the composition is skewed to acidic residues.

This is F-box protein At4g02760 from Arabidopsis thaliana (Mouse-ear cress).